The primary structure comprises 557 residues: Glutamine--tRNA ligase (557 aa).

A 'HIGH' region motif is present at residues 42 to 52 (PEPNGYLHIGH). ATP-binding positions include 43–45 (EPN) and 49–55 (HIGHAKS). Residues Asp75 and Tyr220 each contribute to the L-glutamine site. ATP is bound by residues Thr239 and 270 to 271 (RL). The short motif at 277–281 (LTSKR) is the 'KMSKS' region element.

The protein belongs to the class-I aminoacyl-tRNA synthetase family. As to quaternary structure, monomer.

It is found in the cytoplasm. The enzyme catalyses tRNA(Gln) + L-glutamine + ATP = L-glutaminyl-tRNA(Gln) + AMP + diphosphate. The sequence is that of Glutamine--tRNA ligase from Haemophilus influenzae (strain 86-028NP).